The sequence spans 814 residues: Kinesin-like protein KIF6 (814 aa).

The Kinesin motor domain occupies 5–345; it reads TIQIFARVKP…CRFAQRVALI (341 aa). 97–104 contributes to the ATP binding site; the sequence is GQTGSGKT. 3 coiled-coil regions span residues 356–385, 456–494, and 588–683; these read NPRL…QRTE, LKEE…EALH, and EAKA…KEFE. Residues 752–788 are disordered; that stretch reads LPSPCPSPHSQKQSSTSTPLEDSIPKRPVSSIPLTGD. Residues 759 to 771 are compositionally biased toward polar residues; that stretch reads PHSQKQSSTSTPL.

It belongs to the TRAFAC class myosin-kinesin ATPase superfamily. Kinesin family.

It localises to the cytoplasm. The protein resides in the cytoskeleton. This chain is Kinesin-like protein KIF6 (KIF6), found in Homo sapiens (Human).